The chain runs to 25 residues: MWLILFAIVATLGLMVADDNIWPDC.

This is an uncharacterized protein from Escherichia coli (Bacteriophage T3).